A 540-amino-acid chain; its full sequence is Ubiquitin carboxyl-terminal hydrolase 17-like protein E (540 aa).

Residues 1 to 22 (MVVSLSFPEETGGENLPSAPLE) are disordered. Positions 85 to 382 (CGLQNTGNSC…NAYVLFYVQQ (298 aa)) constitute a USP domain. The Nucleophile role is filled by Cys-94. The Proton acceptor role is filled by His-341. 2 stretches are compositionally biased toward basic and acidic residues: residues 431 to 441 (NREKRAKKETS) and 508 to 520 (APDK…HNGD). 2 disordered regions span residues 431 to 461 (NREK…QKHG) and 499 to 540 (RSTA…QGGR). The span at 523–540 (LTSQGLMSPGQLCSQGGR) shows a compositional bias: polar residues.

It belongs to the peptidase C19 family. USP17 subfamily. Interacts with SUDS3; the interaction is direct.

The protein localises to the nucleus. The protein resides in the endoplasmic reticulum. It catalyses the reaction Thiol-dependent hydrolysis of ester, thioester, amide, peptide and isopeptide bonds formed by the C-terminal Gly of ubiquitin (a 76-residue protein attached to proteins as an intracellular targeting signal).. In terms of biological role, deubiquitinating enzyme that removes conjugated ubiquitin from specific proteins to regulate different cellular processes that may include cell proliferation, progression through the cell cycle, apoptosis, cell migration, and the cellular response to viral infection. In Mus musculus (Mouse), this protein is Ubiquitin carboxyl-terminal hydrolase 17-like protein E (Usp17le).